Reading from the N-terminus, the 906-residue chain is Alanine--tRNA ligase, chloroplastic/mitochondrial (906 aa).

Over residues 1 to 10 the composition is skewed to basic and acidic residues; that stretch reads MSAATERERL. The segment at 1 to 22 is disordered; that stretch reads MSAATERERLTNANPNARGKDN. Residues His-589, His-593, Cys-691, and His-695 each coordinate Zn(2+).

It belongs to the class-II aminoacyl-tRNA synthetase family. In terms of assembly, monomer. Requires Zn(2+) as cofactor.

Its subcellular location is the plastid. The protein localises to the chloroplast. It is found in the mitochondrion. The enzyme catalyses tRNA(Ala) + L-alanine + ATP = L-alanyl-tRNA(Ala) + AMP + diphosphate. Its function is as follows. Catalyzes the attachment of alanine to tRNA(Ala) in a two-step reaction: alanine is first activated by ATP to form Ala-AMP and then transferred to the acceptor end of tRNA(Ala). Also edits incorrectly charged tRNA(Ala) via its editing domain. This Ostreococcus lucimarinus (strain CCE9901) protein is Alanine--tRNA ligase, chloroplastic/mitochondrial.